We begin with the raw amino-acid sequence, 437 residues long: Cysteine--tRNA ligase (437 aa).

C31 lines the Zn(2+) pocket. The 'HIGH' region signature appears at 33 to 43; sequence PTVYNDLHLGN. Zn(2+) is bound by residues C205, H230, and E234. The 'KMSKS' region signature appears at 262-266; that stretch reads KMSKS. Residue K265 participates in ATP binding.

It belongs to the class-I aminoacyl-tRNA synthetase family. In terms of assembly, monomer. Zn(2+) serves as cofactor.

Its subcellular location is the cytoplasm. It carries out the reaction tRNA(Cys) + L-cysteine + ATP = L-cysteinyl-tRNA(Cys) + AMP + diphosphate. This Mycoplasma pneumoniae (strain ATCC 29342 / M129 / Subtype 1) (Mycoplasmoides pneumoniae) protein is Cysteine--tRNA ligase (cysS).